Here is a 1286-residue protein sequence, read N- to C-terminus: Lysine-specific demethylase JMJ705 (1286 aa).

The 42-residue stretch at 25–66 folds into the JmjN domain; that stretch reads APEFRPTAAEFADPVSYILKIEPAAAPYGICKVVPPLPPPPK. The tract at residues 82 to 105 is disordered; it reads PDDRSPSFPTRHQQVGLCPRRTRP. The region spanning 201–367 is the JmjC domain; it reads ETAWNMRGVA…IAKEAAIRRA (167 aa). 3 residues coordinate Fe cation: H244, E246, and H335. Positions 641–679 are enriched in polar residues; sequence PNSSNNVGCVGTKLSSSSTERQERPSSQNAHCNGSSVIS. Disordered stretches follow at residues 641 to 686, 1013 to 1060, and 1077 to 1164; these read PNSS…KGVR, AEPV…HSQE, and PAGT…PKQA. The span at 1119–1136 shows a compositional bias: polar residues; that stretch reads HASGQKSNVQEANANSAS. The C2H2-type 1; degenerate zinc-finger motif lies at 1167-1189; the sequence is YSCDIEGCSMSFRTKRDLSLHKS. C2H2-type zinc fingers lie at residues 1190–1214, 1220–1244, and 1250–1276; these read DICP…RKVH, LTCP…LRVH, and YVCH…KTGH.

Requires Fe(2+) as cofactor. Expressed in leaves and flag leaves. Expressed at low levels in roots, shoots, stems and panicles.

It is found in the nucleus. It carries out the reaction N(6),N(6),N(6)-trimethyl-L-lysyl(27)-[histone H3] + 2 2-oxoglutarate + 2 O2 = N(6)-methyl-L-lysyl(27)-[histone H3] + 2 formaldehyde + 2 succinate + 2 CO2. Its function is as follows. Histone demethylase that demethylates 'Lys-27' (H3K27me) of histone H3 with a specific activity for H3K27me3 and H3K27me2. No activity on H3K4me3, H3K9me3, H3K27me1 and H3K36me3. Involved in biotic stress response. May demethylate H3K27me3-marked defense-related genes and increase their basal and induced expression levels during pathogen infection. The polypeptide is Lysine-specific demethylase JMJ705 (JMJ705) (Oryza sativa subsp. japonica (Rice)).